Consider the following 183-residue polypeptide: Ribosome-recycling factor (183 aa).

The protein belongs to the RRF family.

The protein localises to the cytoplasm. In terms of biological role, responsible for the release of ribosomes from messenger RNA at the termination of protein biosynthesis. May increase the efficiency of translation by recycling ribosomes from one round of translation to another. The protein is Ribosome-recycling factor of Ureaplasma parvum serovar 3 (strain ATCC 27815 / 27 / NCTC 11736).